We begin with the raw amino-acid sequence, 1378 residues long: DNA-directed RNA polymerase subunit beta' (1378 aa).

Residues Cys-69, Cys-71, Cys-84, and Cys-87 each contribute to the Zn(2+) site. Asp-460, Asp-462, and Asp-464 together coordinate Mg(2+). Zn(2+)-binding residues include Cys-808, Cys-882, Cys-889, and Cys-892.

This sequence belongs to the RNA polymerase beta' chain family. In terms of assembly, the RNAP catalytic core consists of 2 alpha, 1 beta, 1 beta' and 1 omega subunit. When a sigma factor is associated with the core the holoenzyme is formed, which can initiate transcription. Mg(2+) is required as a cofactor. It depends on Zn(2+) as a cofactor.

It catalyses the reaction RNA(n) + a ribonucleoside 5'-triphosphate = RNA(n+1) + diphosphate. Functionally, DNA-dependent RNA polymerase catalyzes the transcription of DNA into RNA using the four ribonucleoside triphosphates as substrates. This is DNA-directed RNA polymerase subunit beta' from Rickettsia canadensis (strain McKiel).